We begin with the raw amino-acid sequence, 350 residues long: Serine/threonine-protein kinase SRK2F (350 aa).

Residues 4 to 260 enclose the Protein kinase domain; that stretch reads YDILRDLGSG…VPEIEKHPWF (257 aa). ATP contacts are provided by residues 10 to 18 and Lys33; that span reads LGSGNFGVA. The active-site Proton acceptor is Asp123. The stretch at 270 to 303 forms a coiled coil; that stretch reads EEEKCDNGVEEEEEEEEKCRQSVEEIVKIIEEAR.

Belongs to the protein kinase superfamily. Ser/Thr protein kinase family. As to expression, expressed in seedlings.

The catalysed reaction is L-seryl-[protein] + ATP = O-phospho-L-seryl-[protein] + ADP + H(+). The enzyme catalyses L-threonyl-[protein] + ATP = O-phospho-L-threonyl-[protein] + ADP + H(+). This chain is Serine/threonine-protein kinase SRK2F (SRK2F), found in Arabidopsis thaliana (Mouse-ear cress).